The primary structure comprises 571 residues: Translation initiation factor IF-2 (571 aa).

The tr-type G domain occupies Arg-71 to Tyr-239. The G1 stretch occupies residues Gly-80 to Thr-87. Gly-80–Thr-87 is a GTP binding site. The G2 stretch occupies residues Gly-105–His-109. The tract at residues Asp-126–Gly-129 is G3. GTP-binding positions include Asp-126–His-130 and Asn-180–Asp-183. The tract at residues Asn-180 to Asp-183 is G4. A G5 region spans residues Ser-216–Lys-218.

It belongs to the TRAFAC class translation factor GTPase superfamily. Classic translation factor GTPase family. IF-2 subfamily.

Its subcellular location is the cytoplasm. Its function is as follows. One of the essential components for the initiation of protein synthesis. Protects formylmethionyl-tRNA from spontaneous hydrolysis and promotes its binding to the 30S ribosomal subunits. Also involved in the hydrolysis of GTP during the formation of the 70S ribosomal complex. The protein is Translation initiation factor IF-2 of Thermus thermophilus (strain ATCC BAA-163 / DSM 7039 / HB27).